A 248-amino-acid polypeptide reads, in one-letter code: 3-deoxy-manno-octulosonate cytidylyltransferase (248 aa).

The protein belongs to the KdsB family.

It is found in the cytoplasm. The enzyme catalyses 3-deoxy-alpha-D-manno-oct-2-ulosonate + CTP = CMP-3-deoxy-beta-D-manno-octulosonate + diphosphate. The protein operates within nucleotide-sugar biosynthesis; CMP-3-deoxy-D-manno-octulosonate biosynthesis; CMP-3-deoxy-D-manno-octulosonate from 3-deoxy-D-manno-octulosonate and CTP: step 1/1. Its pathway is bacterial outer membrane biogenesis; lipopolysaccharide biosynthesis. Functionally, activates KDO (a required 8-carbon sugar) for incorporation into bacterial lipopolysaccharide in Gram-negative bacteria. This chain is 3-deoxy-manno-octulosonate cytidylyltransferase, found in Escherichia coli (strain K12 / MC4100 / BW2952).